Consider the following 39-residue polypeptide: Cytochrome b559 subunit beta (39 aa).

The helical transmembrane segment at 14–30 (WLAVHGLAVPTVFFLGS) threads the bilayer. Residue His-18 coordinates heme.

The protein belongs to the PsbE/PsbF family. In terms of assembly, heterodimer of an alpha subunit and a beta subunit. PSII is composed of 1 copy each of membrane proteins PsbA, PsbB, PsbC, PsbD, PsbE, PsbF, PsbH, PsbI, PsbJ, PsbK, PsbL, PsbM, PsbT, PsbX, PsbY, PsbZ, Psb30/Ycf12, at least 3 peripheral proteins of the oxygen-evolving complex and a large number of cofactors. It forms dimeric complexes. Requires heme b as cofactor.

It localises to the plastid. Its subcellular location is the chloroplast thylakoid membrane. Its function is as follows. This b-type cytochrome is tightly associated with the reaction center of photosystem II (PSII). PSII is a light-driven water:plastoquinone oxidoreductase that uses light energy to abstract electrons from H(2)O, generating O(2) and a proton gradient subsequently used for ATP formation. It consists of a core antenna complex that captures photons, and an electron transfer chain that converts photonic excitation into a charge separation. The chain is Cytochrome b559 subunit beta from Adiantum capillus-veneris (Maidenhair fern).